The following is a 163-amino-acid chain: Putative 4-hydroxy-4-methyl-2-oxoglutarate aldolase (163 aa).

Residues 76-79 (GDML) and R98 each bind substrate. D99 provides a ligand contact to a divalent metal cation.

It belongs to the class II aldolase/RraA-like family. As to quaternary structure, homotrimer. A divalent metal cation is required as a cofactor.

It catalyses the reaction 4-hydroxy-4-methyl-2-oxoglutarate = 2 pyruvate. It carries out the reaction oxaloacetate + H(+) = pyruvate + CO2. Functionally, catalyzes the aldol cleavage of 4-hydroxy-4-methyl-2-oxoglutarate (HMG) into 2 molecules of pyruvate. Also contains a secondary oxaloacetate (OAA) decarboxylase activity due to the common pyruvate enolate transition state formed following C-C bond cleavage in the retro-aldol and decarboxylation reactions. The sequence is that of Putative 4-hydroxy-4-methyl-2-oxoglutarate aldolase from Pseudomonas putida (strain GB-1).